We begin with the raw amino-acid sequence, 140 residues long: Biopolymer transport protein exbD1 (140 aa).

Over 1 to 16 the chain is Cytoplasmic; sequence MAFSSGNSGGPMADIN. A helical transmembrane segment spans residues 17–37; that stretch reads VTPLVDVMLVLLIIFIITAPL. Topologically, residues 38 to 140 are periplasmic; that stretch reads MSHKVKVELP…GFVATKEKGQ (103 aa).

Belongs to the ExbD/TolR family. In terms of assembly, the accessory proteins ExbB and ExbD seem to form a complex with TonB.

The protein resides in the cell inner membrane. Involved in the TonB-dependent energy-dependent transport of various receptor-bound substrates. This chain is Biopolymer transport protein exbD1 (exbD1), found in Xanthomonas campestris pv. campestris (strain B100).